The following is a 367-amino-acid chain: Heme A synthase (367 aa).

5 consecutive transmembrane segments (helical) span residues 25–45, 111–131, 139–159, 174–194, and 210–230; these read ALRLWLGFVLLALFCLVLVGG, LIARGIGVIFALPLIFFWLTG, WPLVGILALGGLQGFIGWWMV, LATHLVMACLIFAGCMWIMRG, and GFAAAIAIFALFQIYLGALVA. Residue His-274 coordinates heme. 3 helical membrane passes run 276–296, 305–325, and 327–347; these read IGAYTLFALTLINMVIALRAA, AVVLFSLVTLQAAIGIATLLM, and VPLHWGLLHQAGALVVFGFAV. Residue His-335 participates in heme binding.

The protein belongs to the COX15/CtaA family. Type 2 subfamily. In terms of assembly, interacts with CtaB. The cofactor is heme b.

It is found in the cell membrane. It catalyses the reaction Fe(II)-heme o + 2 A + H2O = Fe(II)-heme a + 2 AH2. It participates in porphyrin-containing compound metabolism; heme A biosynthesis; heme A from heme O: step 1/1. Functionally, catalyzes the conversion of heme O to heme A by two successive hydroxylations of the methyl group at C8. The first hydroxylation forms heme I, the second hydroxylation results in an unstable dihydroxymethyl group, which spontaneously dehydrates, resulting in the formyl group of heme A. This is Heme A synthase from Rhizobium etli (strain CIAT 652).